Here is a 207-residue protein sequence, read N- to C-terminus: Adenylyl-sulfate kinase (207 aa).

An ATP-binding site is contributed by 39–46 (GLSGAGKS). The active-site Phosphoserine intermediate is the Ser-113.

The protein belongs to the APS kinase family.

The catalysed reaction is adenosine 5'-phosphosulfate + ATP = 3'-phosphoadenylyl sulfate + ADP + H(+). Its pathway is sulfur metabolism; hydrogen sulfide biosynthesis; sulfite from sulfate: step 2/3. Functionally, catalyzes the synthesis of activated sulfate. The sequence is that of Adenylyl-sulfate kinase from Vibrio vulnificus (strain CMCP6).